We begin with the raw amino-acid sequence, 694 residues long: Putative ankyrin repeat protein RBE_0921 (694 aa).

ANK repeat units lie at residues 122 to 151, 155 to 185, 216 to 245, 249 to 275, 279 to 317, 321 to 350, 351 to 382, 384 to 413, 423 to 452, and 456 to 485; these read LGKT…NINV, NGRN…NINS, FNRT…NVEA, TGET…NTEA, LGRT…NPNA, YGFT…KFKK, NRYE…NIND, NGQN…DNGK, QRNT…DINA, and DGET…DINI.

The polypeptide is Putative ankyrin repeat protein RBE_0921 (Rickettsia bellii (strain RML369-C)).